The primary structure comprises 136 residues: Large ribosomal subunit protein uL16 (136 aa).

The protein belongs to the universal ribosomal protein uL16 family. In terms of assembly, part of the 50S ribosomal subunit.

Binds 23S rRNA and is also seen to make contacts with the A and possibly P site tRNAs. The chain is Large ribosomal subunit protein uL16 from Proteus mirabilis (strain HI4320).